The sequence spans 591 residues: Complement component C8 beta chain (591 aa).

Positions 1 to 32 (MKNSRTWAWRAPVELFLLCAALGCLSLPGSRG) are cleaved as a signal peptide. Residues 33–54 (ERPHSFGSNAVNKSFAKSRQMR) constitute a propeptide that is removed on maturation. In terms of domain architecture, TSP type-1 1 spans 64–117 (DCELSSWSSWTTCDPCQKKRYRYAYLLQPSQFHGEPCNFSDKEVEDCVTNRPCG). 7 disulfide bridges follow: C65–C100, C76–C110, C79–C116, C122–C133, C127–C146, C140–C155, and C162–C200. W70 and W73 each carry a C-linked (Man) tryptophan glycan. N101 carries N-linked (GlcNAc...) asparagine glycosylation. The LDL-receptor class A domain occupies 120–157 (VRCEGFVCAQTGRCVNRRLLCNGDNDCGDQSDEANCRR). The Ca(2+) site is built by L138, N141, D143, D145, D151, and E152. In terms of domain architecture, MACPF spans 158–504 (IYKKCQHEMD…EFQKEVSSCH (347 aa)). A glycan (N-linked (GlcNAc...) asparagine) is linked at N243. 4 beta stranded membrane passes run 252–259 (SGFSFGFK), 262–269 (GIFELGIS), 379–386 (AKNDFKIG), and 392–399 (VYVSLGVS). C378 and C403 form a disulfide bridge. T418 carries the post-translational modification Phosphothreonine. 4 disulfides stabilise this stretch: C503/C550, C505/C521, C508/C523, and C525/C534. The EGF-like domain maps to 505–535 (CAPCQGNGVPVLKGSRCDCICPVGSQGLACE). The TSP type-1 2 domain maps to 545 to 591 (DGKWNCWSNWSSCSGRRKTRQRQCNNPPPQNGGSPCSGPASETLDCS). C-linked (Man) tryptophan glycans are attached at residues W551 and W554. Residues C557 and C590 are joined by a disulfide bond. Residues 568–591 (CNNPPPQNGGSPCSGPASETLDCS) are disordered.

It belongs to the complement C6/C7/C8/C9 family. Heterotrimer of 3 chains: alpha (C8A), beta (C8B) and gamma (C8G); the alpha and gamma chains are disulfide bonded. Component of the membrane attack complex (MAC), composed of complement C5b, C6, C7, C8A, C8B, C8G and multiple copies of the pore-forming subunit C9. Post-translationally, N-glycosylated; contains one or two bound glycans. Not O-glycosylated.

The protein resides in the secreted. It localises to the target cell membrane. Its activity is regulated as follows. Membrane attack complex (MAC) assembly is inhibited by CD59, thereby protecting self-cells from damage during complement activation. CD59 acts by binding to the beta-haipins of C8 (C8A and C8B), forming an intermolecular beta-sheet that prevents incorporation of the multiple copies of C9 required for complete formation of the osmolytic pore. MAC assembly is also inhibited by clusterin (CLU) chaperones that inhibit polymerization of C9. Component of the membrane attack complex (MAC), a multiprotein complex activated by the complement cascade, which inserts into a target cell membrane and forms a pore, leading to target cell membrane rupture and cell lysis. The MAC is initiated by proteolytic cleavage of C5 into complement C5b in response to the classical, alternative, lectin and GZMK complement pathways. The complement pathways consist in a cascade of proteins that leads to phagocytosis and breakdown of pathogens and signaling that strengthens the adaptive immune system. C8B, together with C8A and C8G, inserts into the target membrane, but does not form pores by itself. During MAC assembly, associates with C5b, C6 and C7 to form the C5b8 intermediate complex that inserts into the target membrane and traverses the bilayer increasing membrane rigidity. The polypeptide is Complement component C8 beta chain (Homo sapiens (Human)).